A 155-amino-acid chain; its full sequence is Transcriptional repressor NrdR (155 aa).

A zinc finger spans residues 3 to 34 (CPFCHAEETKVVDSRLVADGAQVRRRRECLEC). One can recognise an ATP-cone domain in the interval 49–139 (PLIIKRDGRR…VYKRFKDVSD (91 aa)).

It belongs to the NrdR family. The cofactor is Zn(2+).

Its function is as follows. Negatively regulates transcription of bacterial ribonucleotide reductase nrd genes and operons by binding to NrdR-boxes. This Legionella pneumophila (strain Paris) protein is Transcriptional repressor NrdR.